A 383-amino-acid polypeptide reads, in one-letter code: Odorant receptor 94b (383 aa).

Residues methionine 1–tyrosine 41 lie on the Cytoplasmic side of the membrane. The helical transmembrane segment at proline 42–isoleucine 62 threads the bilayer. Residues threonine 63–alanine 70 are Extracellular-facing. A helical membrane pass occupies residues glycine 71–tryptophan 91. At tyrosine 92–arginine 130 the chain is on the cytoplasmic side. The chain crosses the membrane as a helical span at residues isoleucine 131 to phenylalanine 151. The Extracellular portion of the chain corresponds to phenylalanine 152–tyrosine 174. A helical membrane pass occupies residues phenylalanine 175–leucine 195. Residues aspartate 196–glutamate 250 lie on the Cytoplasmic side of the membrane. Residues valine 251–serine 271 traverse the membrane as a helical segment. At alanine 272–proline 284 the chain is on the extracellular side. A helical membrane pass occupies residues glycine 285–cysteine 305. Residues tyrosine 306 to glutamate 358 lie on the Cytoplasmic side of the membrane. The chain crosses the membrane as a helical span at residues isoleucine 359 to leucine 379. The Extracellular portion of the chain corresponds to lysine 380–lysine 383.

The protein belongs to the insect chemoreceptor superfamily. Heteromeric odorant receptor channel (TC 1.A.69) family. Or2a subfamily. In terms of assembly, interacts with Orco. Complexes exist early in the endomembrane system in olfactory sensory neurons (OSNs), coupling these complexes to the conserved ciliary trafficking pathway.

It is found in the cell membrane. Its function is as follows. Odorant receptor which mediates acceptance or avoidance behavior, depending on its substrates. The odorant receptor repertoire encodes a large collection of odor stimuli that vary widely in identity, intensity, and duration. May form a complex with Orco to form odorant-sensing units, providing sensitive and prolonged odorant signaling and calcium permeability. The polypeptide is Odorant receptor 94b (Or94b) (Drosophila melanogaster (Fruit fly)).